The sequence spans 249 residues: Phosphate import ATP-binding protein PstB 2 (249 aa).

An ABC transporter domain is found at 4 to 244 (IEVRDLDLFY…PKDKRTEDYI (241 aa)). ATP is bound at residue 36–43 (GPSGCGKS).

It belongs to the ABC transporter superfamily. Phosphate importer (TC 3.A.1.7) family. In terms of assembly, the complex is composed of two ATP-binding proteins (PstB), two transmembrane proteins (PstC and PstA) and a solute-binding protein (PstS).

It is found in the cell membrane. It carries out the reaction phosphate(out) + ATP + H2O = ADP + 2 phosphate(in) + H(+). Functionally, part of the ABC transporter complex PstSACB involved in phosphate import. Responsible for energy coupling to the transport system. This Caldanaerobacter subterraneus subsp. tengcongensis (strain DSM 15242 / JCM 11007 / NBRC 100824 / MB4) (Thermoanaerobacter tengcongensis) protein is Phosphate import ATP-binding protein PstB 2.